A 274-amino-acid chain; its full sequence is Large ribosomal subunit protein uL2cz/uL2cy (274 aa).

Disordered regions lie at residues 1-21 (MAIHLYKTSTPGTRNGAVDSQ) and 224-274 (NPVD…RRSK).

This sequence belongs to the universal ribosomal protein uL2 family. Part of the 50S ribosomal subunit.

Its subcellular location is the plastid. The protein localises to the chloroplast. In Gossypium hirsutum (Upland cotton), this protein is Large ribosomal subunit protein uL2cz/uL2cy (rpl2-A).